A 336-amino-acid polypeptide reads, in one-letter code: UPF0284 protein Pcal_1534 (336 aa).

It belongs to the UPF0284 family.

The sequence is that of UPF0284 protein Pcal_1534 from Pyrobaculum calidifontis (strain DSM 21063 / JCM 11548 / VA1).